A 303-amino-acid chain; its full sequence is Probable 5-dehydro-4-deoxyglucarate dehydratase (303 aa).

Belongs to the DapA family.

The enzyme catalyses 5-dehydro-4-deoxy-D-glucarate + H(+) = 2,5-dioxopentanoate + CO2 + H2O. It participates in carbohydrate acid metabolism; D-glucarate degradation; 2,5-dioxopentanoate from D-glucarate: step 2/2. The sequence is that of Probable 5-dehydro-4-deoxyglucarate dehydratase from Pseudomonas syringae pv. tomato (strain ATCC BAA-871 / DC3000).